The primary structure comprises 410 residues: E3 ubiquitin-protein ligase PRT1 (410 aa).

2 RING-type zinc fingers span residues 26 to 66 (CCVC…PICR) and 192 to 232 (CSAC…QECN). The ZZ-type zinc-finger motif lies at 306–370 (HFGAGCDSCG…RLELARSPQV (65 aa)). 8 residues coordinate Zn(2+): Cys-311, Cys-314, Cys-326, Cys-329, Cys-338, Cys-341, His-356, and His-360. A disordered region spans residues 385-410 (ISNEGMDTDEGEEGPPGSSNESSSTE). Over residues 399–410 (PPGSSNESSSTE) the composition is skewed to low complexity.

It is found in the cytoplasm. The catalysed reaction is S-ubiquitinyl-[E2 ubiquitin-conjugating enzyme]-L-cysteine + [acceptor protein]-L-lysine = [E2 ubiquitin-conjugating enzyme]-L-cysteine + N(6)-ubiquitinyl-[acceptor protein]-L-lysine.. Its pathway is protein modification; protein ubiquitination. Functionally, E3 ubiquitin-protein ligase that mediates ubiquitination and subsequent proteasomal degradation of target proteins. Functions in the N-end rule pathway of protein degradation, where it specifically recognizes and ubiquitinates proteins with a N-terminal bulky aromatic amino acid (Phe). Does not act on aliphatic hydrophobic and basic N-terminal residues (Arg or Leu) containing proteins. The polypeptide is E3 ubiquitin-protein ligase PRT1 (PRT1) (Arabidopsis thaliana (Mouse-ear cress)).